We begin with the raw amino-acid sequence, 219 residues long: Elongation factor Ts (219 aa).

The involved in Mg(2+) ion dislocation from EF-Tu stretch occupies residues 81–84 (SDFV).

Belongs to the EF-Ts family.

It localises to the cytoplasm. Its function is as follows. Associates with the EF-Tu.GDP complex and induces the exchange of GDP to GTP. It remains bound to the aminoacyl-tRNA.EF-Tu.GTP complex up to the GTP hydrolysis stage on the ribosome. The polypeptide is Elongation factor Ts (Koribacter versatilis (strain Ellin345)).